We begin with the raw amino-acid sequence, 201 residues long: 3-isopropylmalate dehydratase small subunit (201 aa).

The protein belongs to the LeuD family. LeuD type 1 subfamily. As to quaternary structure, heterodimer of LeuC and LeuD.

It catalyses the reaction (2R,3S)-3-isopropylmalate = (2S)-2-isopropylmalate. The protein operates within amino-acid biosynthesis; L-leucine biosynthesis; L-leucine from 3-methyl-2-oxobutanoate: step 2/4. Its function is as follows. Catalyzes the isomerization between 2-isopropylmalate and 3-isopropylmalate, via the formation of 2-isopropylmaleate. In Dinoroseobacter shibae (strain DSM 16493 / NCIMB 14021 / DFL 12), this protein is 3-isopropylmalate dehydratase small subunit.